A 346-amino-acid chain; its full sequence is L-malyl-CoA/beta-methylmalyl-CoA lyase (346 aa).

Positions 148 and 177 each coordinate Mg(2+). Residues 176–177 (VD) and 253–254 (LH) each bind substrate.

Belongs to the HpcH/HpaI aldolase family. Requires Mg(2+) as cofactor. It depends on Mn(2+) as a cofactor.

The catalysed reaction is (S)-malyl-CoA = glyoxylate + acetyl-CoA. It carries out the reaction (2R,3S)-beta-methylmalyl-CoA = propanoyl-CoA + glyoxylate. Functionally, involved in the methylaspartate cycle. Catalyzes the reversible cleavage of beta-methylmalyl-CoA to propionyl-CoA and glyoxylate, as well as the reversible cleavage of (S)-malyl-CoA to acetyl-CoA and glyoxylate. In addition, it has a small malyl-CoA thioesterase activity. It can also catalyze the cleavage of (S)-citramalyl-CoA to acetyl-CoA and pyruvate. The chain is L-malyl-CoA/beta-methylmalyl-CoA lyase (citE1) from Haloarcula marismortui (strain ATCC 43049 / DSM 3752 / JCM 8966 / VKM B-1809) (Halobacterium marismortui).